The chain runs to 335 residues: Phosphate acyltransferase (335 aa).

It belongs to the PlsX family. In terms of assembly, homodimer. Probably interacts with PlsY.

The protein localises to the cytoplasm. It carries out the reaction a fatty acyl-[ACP] + phosphate = an acyl phosphate + holo-[ACP]. The protein operates within lipid metabolism; phospholipid metabolism. Its function is as follows. Catalyzes the reversible formation of acyl-phosphate (acyl-PO(4)) from acyl-[acyl-carrier-protein] (acyl-ACP). This enzyme utilizes acyl-ACP as fatty acyl donor, but not acyl-CoA. This is Phosphate acyltransferase from Alkaliphilus oremlandii (strain OhILAs) (Clostridium oremlandii (strain OhILAs)).